Reading from the N-terminus, the 225-residue chain is ATP-dependent dethiobiotin synthetase BioD (225 aa).

ATP is bound at residue 12 to 17 (GVGKTV). Thr16 contributes to the Mg(2+) binding site. Residue Lys37 is part of the active site. Thr41 is a substrate binding site. ATP-binding positions include Asp49, 108 to 111 (EGAG), and 197 to 199 (PAG). Asp49 and Glu108 together coordinate Mg(2+).

Belongs to the dethiobiotin synthetase family. In terms of assembly, homodimer. The cofactor is Mg(2+).

It is found in the cytoplasm. The enzyme catalyses (7R,8S)-7,8-diammoniononanoate + CO2 + ATP = (4R,5S)-dethiobiotin + ADP + phosphate + 3 H(+). It functions in the pathway cofactor biosynthesis; biotin biosynthesis; biotin from 7,8-diaminononanoate: step 1/2. Catalyzes a mechanistically unusual reaction, the ATP-dependent insertion of CO2 between the N7 and N8 nitrogen atoms of 7,8-diaminopelargonic acid (DAPA, also called 7,8-diammoniononanoate) to form a ureido ring. The sequence is that of ATP-dependent dethiobiotin synthetase BioD from Mycolicibacterium smegmatis (strain ATCC 700084 / mc(2)155) (Mycobacterium smegmatis).